Consider the following 136-residue polypeptide: Small ribosomal subunit protein bS16 (136 aa).

Over residues 114 to 123 (TLKARRRRAK) the composition is skewed to basic residues. The disordered stretch occupies residues 114-136 (TLKARRRRAKKEAEAASASSAEG).

Belongs to the bacterial ribosomal protein bS16 family.

In Chlorobium chlorochromatii (strain CaD3), this protein is Small ribosomal subunit protein bS16.